The sequence spans 399 residues: S-adenosylmethionine synthase (399 aa).

His-17 is a binding site for ATP. Asp-19 is a binding site for Mg(2+). Glu-52 is a K(+) binding site. L-methionine-binding residues include Glu-65 and Gln-109. A flexible loop region spans residues 109–119 (QSADIAQGVDA). ATP is bound by residues 177–179 (DSK), 243–244 (KF), Asp-252, 258–259 (RK), Ala-275, and Lys-279. Residue Asp-252 coordinates L-methionine. Lys-283 is an L-methionine binding site.

Belongs to the AdoMet synthase family. In terms of assembly, homotetramer; dimer of dimers. Requires Mg(2+) as cofactor. It depends on K(+) as a cofactor.

The protein localises to the cytoplasm. It catalyses the reaction L-methionine + ATP + H2O = S-adenosyl-L-methionine + phosphate + diphosphate. It participates in amino-acid biosynthesis; S-adenosyl-L-methionine biosynthesis; S-adenosyl-L-methionine from L-methionine: step 1/1. Its function is as follows. Catalyzes the formation of S-adenosylmethionine (AdoMet) from methionine and ATP. The overall synthetic reaction is composed of two sequential steps, AdoMet formation and the subsequent tripolyphosphate hydrolysis which occurs prior to release of AdoMet from the enzyme. This is S-adenosylmethionine synthase from Bradyrhizobium sp. (strain BTAi1 / ATCC BAA-1182).